We begin with the raw amino-acid sequence, 301 residues long: Protease HtpX (301 aa).

The next 2 helical transmembrane spans lie at isoleucine 4–leucine 24 and leucine 38–leucine 58. Residue histidine 147 participates in Zn(2+) binding. Residue glutamate 148 is part of the active site. Histidine 151 contacts Zn(2+). 2 consecutive transmembrane segments (helical) span residues glycine 155–alanine 175 and phenylalanine 200–tryptophan 220. Glutamate 226 serves as a coordination point for Zn(2+).

Belongs to the peptidase M48B family. Requires Zn(2+) as cofactor.

The protein localises to the cell inner membrane. This chain is Protease HtpX, found in Acinetobacter baylyi (strain ATCC 33305 / BD413 / ADP1).